We begin with the raw amino-acid sequence, 274 residues long: Acetyl-coenzyme A carboxylase carboxyl transferase subunit alpha (274 aa).

In terms of domain architecture, CoA carboxyltransferase C-terminal spans 2-250; the sequence is NKEFIKSIVV…KKEIMNAMNE (249 aa).

This sequence belongs to the AccA family. Acetyl-CoA carboxylase is a heterohexamer composed of biotin carboxyl carrier protein (AccB), biotin carboxylase (AccC) and two subunits each of ACCase subunit alpha (AccA) and ACCase subunit beta (AccD).

Its subcellular location is the cytoplasm. The catalysed reaction is N(6)-carboxybiotinyl-L-lysyl-[protein] + acetyl-CoA = N(6)-biotinyl-L-lysyl-[protein] + malonyl-CoA. The protein operates within lipid metabolism; malonyl-CoA biosynthesis; malonyl-CoA from acetyl-CoA: step 1/1. Its function is as follows. Component of the acetyl coenzyme A carboxylase (ACC) complex. First, biotin carboxylase catalyzes the carboxylation of biotin on its carrier protein (BCCP) and then the CO(2) group is transferred by the carboxyltransferase to acetyl-CoA to form malonyl-CoA. The protein is Acetyl-coenzyme A carboxylase carboxyl transferase subunit alpha of Clostridium botulinum (strain Alaska E43 / Type E3).